A 471-amino-acid chain; its full sequence is MCGIFGIYSYERLNVAKKIYYGLFALQHRGQEGAGIATSDGKNIHYYKNIGLVTDVFKNETLQNLFGYIGIGHVRYSTTGGKAVENCQPFVVKSSFGNIAIAHNGDLVNSDELRRELEMKGHIFTSSTDSEVIAQLLVRELLKTSDKIEAIKNTLKKLVGAYSLLIMFNDSLIAVRDPWGFKPLCIGRDESNIYISSEDCALTTLDAEFVKDIEPGEIIEIKDGEIISHKLDYGVSEYNPVNVDVPCIYRGAATCMFEYVYFARPDSTIDGISVYKVRKRIGKILAKEHPVDADVVSPIPDSGVTFALGFSEESGIPYYEGLIKNRYVGRTFILPSQNERELAVRLKLSPVKSVLEGKRVVLVDDSIVRGTTSRRIVNMVRKAGAKEVHLRIGCPKIISPCYYGIDMATKKELIASNKTEEEIGKAIGVDSIGYLSLEGLVKAIGRKDLCLACVTGKYPTEVNFEKILGRE.

Catalysis depends on cysteine 2, which acts as the Nucleophile. The 223-residue stretch at 2–224 (CGIFGIYSYE…PGEIIEIKDG (223 aa)) folds into the Glutamine amidotransferase type-2 domain. Residue cysteine 255 coordinates [4Fe-4S] cluster. Positions 302, 364, and 365 each coordinate Mg(2+). Positions 401, 450, and 453 each coordinate [4Fe-4S] cluster.

It in the C-terminal section; belongs to the purine/pyrimidine phosphoribosyltransferase family. Mg(2+) serves as cofactor. It depends on [4Fe-4S] cluster as a cofactor.

The catalysed reaction is 5-phospho-beta-D-ribosylamine + L-glutamate + diphosphate = 5-phospho-alpha-D-ribose 1-diphosphate + L-glutamine + H2O. It participates in purine metabolism; IMP biosynthesis via de novo pathway; N(1)-(5-phospho-D-ribosyl)glycinamide from 5-phospho-alpha-D-ribose 1-diphosphate: step 1/2. Its function is as follows. Catalyzes the formation of phosphoribosylamine from phosphoribosylpyrophosphate (PRPP) and glutamine. The chain is Amidophosphoribosyltransferase from Methanocaldococcus jannaschii (strain ATCC 43067 / DSM 2661 / JAL-1 / JCM 10045 / NBRC 100440) (Methanococcus jannaschii).